Consider the following 448-residue polypeptide: MQVPKNNIYTVSRLNGEVRQILEGQLGKVWLNGEISNFSAPSSGHWYLTLKDHYSQIRCAMFKGRNQSVSFKPVNGQQVLVKGAISVYEPRGDYQLLIESMLPAGDGLLAQQFEALKMKLAAQGLFAADTKRQLPKNIQRIGVITSPTGAAIRDVLHVLARRDPSIEVIIYPTQVQGESADLNICQAINIANQRLEVDVLLLTRGGGSLEDLWCFNSEALAHTIYNSALPVVSAVGHEVDTTISDYVADVRAPTPSAGAELLSQDSDNKSQRLATVLSRLKQSANHYQLKQERRLSLLEHRLQRLDPKRTLQQFEQRFDEMQLRLEAALSNKLHGLSRRQQQLANRLEKQSPKHKLALETNRLNYLATRLQDAMQDTLNQSEQRIKYAAHQLETVSPLATLSRGYSITTDANNQIIDNAAQLSVGDKINTRLRHGQVQSTVTQITDES.

Belongs to the XseA family. As to quaternary structure, heterooligomer composed of large and small subunits.

It localises to the cytoplasm. It carries out the reaction Exonucleolytic cleavage in either 5'- to 3'- or 3'- to 5'-direction to yield nucleoside 5'-phosphates.. Its function is as follows. Bidirectionally degrades single-stranded DNA into large acid-insoluble oligonucleotides, which are then degraded further into small acid-soluble oligonucleotides. This Shewanella sp. (strain MR-7) protein is Exodeoxyribonuclease 7 large subunit.